A 320-amino-acid chain; its full sequence is Malate dehydrogenase (320 aa).

Residues Gly-10–Gly-15 and Asp-34 contribute to the NAD(+) site. Residues Arg-83 and Arg-89 each coordinate substrate. NAD(+) is bound by residues Asn-96 and Ile-119 to Asn-121. The substrate site is built by Asn-121 and Arg-152. His-176 (proton acceptor) is an active-site residue.

The protein belongs to the LDH/MDH superfamily. MDH type 3 family.

It catalyses the reaction (S)-malate + NAD(+) = oxaloacetate + NADH + H(+). In terms of biological role, catalyzes the reversible oxidation of malate to oxaloacetate. The protein is Malate dehydrogenase of Cereibacter sphaeroides (strain ATCC 17029 / ATH 2.4.9) (Rhodobacter sphaeroides).